Reading from the N-terminus, the 315-residue chain is Acetyl-coenzyme A carboxylase carboxyl transferase subunit alpha (315 aa).

A CoA carboxyltransferase C-terminal domain is found at Leu36–Ile289.

This sequence belongs to the AccA family. As to quaternary structure, acetyl-CoA carboxylase is a heterohexamer composed of biotin carboxyl carrier protein (AccB), biotin carboxylase (AccC) and two subunits each of ACCase subunit alpha (AccA) and ACCase subunit beta (AccD).

The protein resides in the cytoplasm. It catalyses the reaction N(6)-carboxybiotinyl-L-lysyl-[protein] + acetyl-CoA = N(6)-biotinyl-L-lysyl-[protein] + malonyl-CoA. Its pathway is lipid metabolism; malonyl-CoA biosynthesis; malonyl-CoA from acetyl-CoA: step 1/1. Functionally, component of the acetyl coenzyme A carboxylase (ACC) complex. First, biotin carboxylase catalyzes the carboxylation of biotin on its carrier protein (BCCP) and then the CO(2) group is transferred by the carboxyltransferase to acetyl-CoA to form malonyl-CoA. The chain is Acetyl-coenzyme A carboxylase carboxyl transferase subunit alpha from Francisella tularensis subsp. tularensis (strain FSC 198).